The sequence spans 208 residues: N-(5'-phosphoribosyl)anthranilate isomerase (208 aa).

It belongs to the TrpF family.

It carries out the reaction N-(5-phospho-beta-D-ribosyl)anthranilate = 1-(2-carboxyphenylamino)-1-deoxy-D-ribulose 5-phosphate. Its pathway is amino-acid biosynthesis; L-tryptophan biosynthesis; L-tryptophan from chorismate: step 3/5. This chain is N-(5'-phosphoribosyl)anthranilate isomerase, found in Neisseria gonorrhoeae (strain ATCC 700825 / FA 1090).